The following is a 313-amino-acid chain: Probable inactive peptidyl-prolyl cis-trans isomerase-like 6 (313 aa).

The 164-residue stretch at 147 to 310 folds into the PPIase cyclophilin-type domain; that stretch reads YLDICIDLSP…LLCSIADSGV (164 aa).

The protein belongs to the cyclophilin-type PPIase family.

Its function is as follows. Probable inactive PPIase with no peptidyl-prolyl cis-trans isomerase activity. This is Probable inactive peptidyl-prolyl cis-trans isomerase-like 6 from Mus musculus (Mouse).